The following is a 282-amino-acid chain: Energy-coupling factor transporter ATP-binding protein EcfA1 (282 aa).

The 235-residue stretch at 9–243 folds into the ABC transporter domain; that stretch reads IEIDNLSFKY…NDELLNIGLD (235 aa). 43–50 is a binding site for ATP; that stretch reads GHNGSGKS.

The protein belongs to the ABC transporter superfamily. Energy-coupling factor EcfA family. As to quaternary structure, forms a stable energy-coupling factor (ECF) transporter complex composed of 2 membrane-embedded substrate-binding proteins (S component), 2 ATP-binding proteins (A component) and 2 transmembrane proteins (T component).

It is found in the cell membrane. ATP-binding (A) component of a common energy-coupling factor (ECF) ABC-transporter complex. Unlike classic ABC transporters this ECF transporter provides the energy necessary to transport a number of different substrates. The chain is Energy-coupling factor transporter ATP-binding protein EcfA1 from Ligilactobacillus salivarius (strain UCC118) (Lactobacillus salivarius).